The sequence spans 714 residues: MFNTHKVEIEWGGRPLTLETGKIARQADGAVLATYGETAVLATVVSAKEPKPGQDFFPLTVNYQEKTYAAGKIPGGYFKREGRPSENETLVSRLIDRPIRPLFVDGYKNDTQVVITVLQHDLENNPDILSMVAASAALTISGVPFMGPISGARVGYIDGEYVLNPNIDEMPESKLDLVVAGTSEAVLMVESEAQELPEDVMLGAVMFGHKSFQPVIDAIIKLAEVAAKEPRDFQPEDLSELEAKVLAVVENDLREAYKITEKQARYAAVDAAKAKAKEHFFPEGVEETEMSAEQFATIFKHLQAKIVRWNILDTGNRIDGRDLSTVRPIVSEVGILPRTHGSALFTRGETQAIVVATLGTGEDEQMIDALTGTYKESFMLHYNFPPYSVGETGRMGSPGRREIGHGKLAWRAIHPMLPAAEQFPYTIRAVSEITESNGSSSMATVCGTSLALMDAGVPIVRPVAGIAMGLIKEGERFAVLSDILGDEDYLGDMDFKVAGTEFGITSLQMDIKIDGITEEIMKVALEQAKGGRVHILGEMAKAISSSRAELGEFAPRIEVMNIPTDKIRDVIGSGGKVIREIVEKTGAKINIEDDGTVKIASSNGKEIEAAKKWIHSIVAEPEVGEIYEGTVVKTADFGAFVNFFGPRDGLVHISQLAADRVAKTTDVVKEGQKVWVKLMGFDERGKVRLSMKVVDQETGKEIVAEKKKEEVDAE.

Residues aspartate 488 and aspartate 494 each coordinate Mg(2+). The region spanning 555-614 is the KH domain; it reads PRIEVMNIPTDKIRDVIGSGGKVIREIVEKTGAKINIEDDGTVKIASSNGKEIEAAKKWI. One can recognise an S1 motif domain in the interval 624–692; sequence GEIYEGTVVK…ERGKVRLSMK (69 aa).

The protein belongs to the polyribonucleotide nucleotidyltransferase family. Mg(2+) is required as a cofactor.

Its subcellular location is the cytoplasm. It catalyses the reaction RNA(n+1) + phosphate = RNA(n) + a ribonucleoside 5'-diphosphate. Its function is as follows. Involved in mRNA degradation. Catalyzes the phosphorolysis of single-stranded polyribonucleotides processively in the 3'- to 5'-direction. The chain is Polyribonucleotide nucleotidyltransferase from Brucella suis biovar 1 (strain 1330).